A 613-amino-acid polypeptide reads, in one-letter code: Dihydroxy-acid dehydratase (613 aa).

Asp-81 is a binding site for Mg(2+). A [2Fe-2S] cluster-binding site is contributed by Cys-122. Positions 123 and 124 each coordinate Mg(2+). Position 124 is an N6-carboxylysine (Lys-124). Residue Cys-195 participates in [2Fe-2S] cluster binding. Glu-491 lines the Mg(2+) pocket. The Proton acceptor role is filled by Ser-517.

The protein belongs to the IlvD/Edd family. In terms of assembly, homodimer. [2Fe-2S] cluster serves as cofactor. Requires Mg(2+) as cofactor.

It carries out the reaction (2R)-2,3-dihydroxy-3-methylbutanoate = 3-methyl-2-oxobutanoate + H2O. It catalyses the reaction (2R,3R)-2,3-dihydroxy-3-methylpentanoate = (S)-3-methyl-2-oxopentanoate + H2O. Its pathway is amino-acid biosynthesis; L-isoleucine biosynthesis; L-isoleucine from 2-oxobutanoate: step 3/4. The protein operates within amino-acid biosynthesis; L-valine biosynthesis; L-valine from pyruvate: step 3/4. Functionally, functions in the biosynthesis of branched-chain amino acids. Catalyzes the dehydration of (2R,3R)-2,3-dihydroxy-3-methylpentanoate (2,3-dihydroxy-3-methylvalerate) into 2-oxo-3-methylpentanoate (2-oxo-3-methylvalerate) and of (2R)-2,3-dihydroxy-3-methylbutanoate (2,3-dihydroxyisovalerate) into 2-oxo-3-methylbutanoate (2-oxoisovalerate), the penultimate precursor to L-isoleucine and L-valine, respectively. The chain is Dihydroxy-acid dehydratase from Vibrio parahaemolyticus serotype O3:K6 (strain RIMD 2210633).